A 106-amino-acid chain; its full sequence is ATP synthase-coupling factor 6, mitochondrial (106 aa).

Belongs to the eukaryotic ATPase subunit F6 family. F-type ATPases have 2 components, CF(1) - the catalytic core - and CF(0) - the membrane proton channel. CF(0) seems to have nine subunits: a, b, c, d, e, f, g, F6 and 8 (or A6L).

The protein resides in the mitochondrion. It is found in the mitochondrion inner membrane. Its function is as follows. Mitochondrial membrane ATP synthase (F(1)F(0) ATP synthase or Complex V) produces ATP from ADP in the presence of a proton gradient across the membrane which is generated by electron transport complexes of the respiratory chain. F-type ATPases consist of two structural domains, F(1) - containing the extramembraneous catalytic core and F(0) - containing the membrane proton channel, linked together by a central stalk and a peripheral stalk. During catalysis, ATP synthesis in the catalytic domain of F(1) is coupled via a rotary mechanism of the central stalk subunits to proton translocation. Part of the complex F(0) domain and the peripheric stalk, which acts as a stator to hold the catalytic alpha(3)beta(3) subcomplex and subunit a/ATP6 static relative to the rotary elements. The protein is ATP synthase-coupling factor 6, mitochondrial of Drosophila melanogaster (Fruit fly).